The sequence spans 66 residues: Conotoxin Ca5.2 (66 aa).

The N-terminal stretch at 1–22 is a signal peptide; it reads MRCVPVFLILLGLIASAPSVDA. Residues 23–48 constitute a propeptide that is removed on maturation; the sequence is RPQTKDDALASFHDSAKRHLQRLVNA. Phe-62 carries the post-translational modification Phenylalanine amide.

The protein belongs to the conotoxin T superfamily. Contains 2 disulfide bonds that can be either 'C1-C3, C2-C4' or 'C1-C4, C2-C3', since these disulfide connectivities have been observed for conotoxins with cysteine framework V (for examples, see AC P0DQQ7 and AC P81755). Expressed by the venom duct.

It localises to the secreted. The chain is Conotoxin Ca5.2 from Conus caracteristicus (Characteristic cone).